A 135-amino-acid polypeptide reads, in one-letter code: Succinate dehydrogenase assembly factor 3, mitochondrial (135 aa).

The transit peptide at 1–12 directs the protein to the mitochondrion; the sequence is MRIFTRLLYAAP.

It belongs to the complex I LYR family. SDHAF3 subfamily. In terms of assembly, interacts with the iron-sulfur protein subunit within the SDH catalytic dimer.

It localises to the mitochondrion matrix. Plays an essential role in the assembly of succinate dehydrogenase (SDH), an enzyme complex (also referred to as respiratory complex II) that is a component of both the tricarboxylic acid (TCA) cycle and the mitochondrial electron transport chain, and which couples the oxidation of succinate to fumarate with the reduction of ubiquinone (coenzyme Q) to ubiquinol. Promotes maturation of the iron-sulfur protein subunit of the SDH catalytic dimer, protecting it from the deleterious effects of oxidants. May act together with SDHAF1. This chain is Succinate dehydrogenase assembly factor 3, mitochondrial, found in Emericella nidulans (strain FGSC A4 / ATCC 38163 / CBS 112.46 / NRRL 194 / M139) (Aspergillus nidulans).